The sequence spans 321 residues: Probable endolytic peptidoglycan transglycosylase RlpA (321 aa).

The protein belongs to the RlpA family.

Functionally, lytic transglycosylase with a strong preference for naked glycan strands that lack stem peptides. The protein is Probable endolytic peptidoglycan transglycosylase RlpA of Synechocystis sp. (strain ATCC 27184 / PCC 6803 / Kazusa).